Here is a 196-residue protein sequence, read N- to C-terminus: Holliday junction branch migration complex subunit RuvA (196 aa).

The interval 1–63 is domain I; it reads MYDYIKGKLS…DDAHLLFGFH (63 aa). A domain II region spans residues 64–142; the sequence is TENEKEIFLN…EASGESATSR (79 aa). The interval 143-148 is flexible linker; it reads KVSSEQ. The segment at 148–196 is domain III; sequence QNSNLEEAMEALLALGYKATELKKVKAFFEGTNETVEQYIKSSLKMLMK.

It belongs to the RuvA family. As to quaternary structure, homotetramer. Forms an RuvA(8)-RuvB(12)-Holliday junction (HJ) complex. HJ DNA is sandwiched between 2 RuvA tetramers; dsDNA enters through RuvA and exits via RuvB. An RuvB hexamer assembles on each DNA strand where it exits the tetramer. Each RuvB hexamer is contacted by two RuvA subunits (via domain III) on 2 adjacent RuvB subunits; this complex drives branch migration. In the full resolvosome a probable DNA-RuvA(4)-RuvB(12)-RuvC(2) complex forms which resolves the HJ.

Its subcellular location is the cytoplasm. The RuvA-RuvB-RuvC complex processes Holliday junction (HJ) DNA during genetic recombination and DNA repair, while the RuvA-RuvB complex plays an important role in the rescue of blocked DNA replication forks via replication fork reversal (RFR). RuvA specifically binds to HJ cruciform DNA, conferring on it an open structure. The RuvB hexamer acts as an ATP-dependent pump, pulling dsDNA into and through the RuvAB complex. HJ branch migration allows RuvC to scan DNA until it finds its consensus sequence, where it cleaves and resolves the cruciform DNA. This Streptococcus agalactiae serotype Ia (strain ATCC 27591 / A909 / CDC SS700) protein is Holliday junction branch migration complex subunit RuvA.